A 347-amino-acid polypeptide reads, in one-letter code: DnaJ homolog subfamily C member 22 (347 aa).

The TM2 domain maps to 4–50 (GLLMTYTLWAVGGPAGLHHLYLGRDSHALLWMLTLGGGGLGWLWEFW). Transmembrane regions (helical) follow at residues 5–25 (LLMTYTLWAVGGPAGLHHLYL), 32–52 (LLWMLTLGGGGLGWLWEFWML), 81–101 (FVAQMIVGMYFGLVALISLSF), 105–125 (FYIVGLPLAVGLGVLLVAAVG), 135–155 (LGAAFLTSPIFYGRPIAILPI), 186–206 (GLAYLAFTGPLVHSVLCHTAV), and 218–238 (FLSWFSFFPLLGRLLESVLLL). The J domain maps to 277-347 (LALQVFGLSE…GSWRWEETSF (71 aa)).

It is found in the membrane. Its function is as follows. May function as a co-chaperone. The sequence is that of DnaJ homolog subfamily C member 22 (DNAJC22) from Bos taurus (Bovine).